Consider the following 125-residue polypeptide: Small ribosomal subunit protein uS17 (125 aa).

Disordered regions lie at residues 1-21 (MSSS…VSSR) and 101-125 (VAAQ…APQA).

Belongs to the universal ribosomal protein uS17 family. Part of the 30S ribosomal subunit.

Functionally, one of the primary rRNA binding proteins, it binds specifically to the 5'-end of 16S ribosomal RNA. The chain is Small ribosomal subunit protein uS17 from Opitutus terrae (strain DSM 11246 / JCM 15787 / PB90-1).